The primary structure comprises 236 residues: Ureidoacrylate amidohydrolase RutB (236 aa).

The Proton acceptor role is filled by aspartate 24. Lysine 133 is a catalytic residue. The Nucleophile role is filled by cysteine 166.

Belongs to the isochorismatase family. RutB subfamily.

The enzyme catalyses (Z)-3-ureidoacrylate + H2O + H(+) = (Z)-3-aminoacrylate + NH4(+) + CO2. It catalyses the reaction (Z)-3-ureidoacrylate + H2O = (Z)-3-aminoacrylate + carbamate + H(+). It carries out the reaction (Z)-2-methylureidoacrylate + H2O + H(+) = (Z)-2-methylaminoacrylate + NH4(+) + CO2. In terms of biological role, hydrolyzes ureidoacrylate to form aminoacrylate and carbamate. The carbamate hydrolyzes spontaneously, thereby releasing one of the nitrogen atoms of the pyrimidine ring as ammonia and one of its carbon atoms as CO2. In Klebsiella pneumoniae (strain 342), this protein is Ureidoacrylate amidohydrolase RutB.